A 126-amino-acid chain; its full sequence is Small ribosomal subunit protein uS13 (126 aa).

The disordered stretch occupies residues 98–126 (PLRGQSTKNNARTRKGKKKTVANKKKATK). Residues 108-126 (ARTRKGKKKTVANKKKATK) show a composition bias toward basic residues.

This sequence belongs to the universal ribosomal protein uS13 family. Part of the 30S ribosomal subunit. Forms a loose heterodimer with protein S19. Forms two bridges to the 50S subunit in the 70S ribosome.

Functionally, located at the top of the head of the 30S subunit, it contacts several helices of the 16S rRNA. In the 70S ribosome it contacts the 23S rRNA (bridge B1a) and protein L5 of the 50S subunit (bridge B1b), connecting the 2 subunits; these bridges are implicated in subunit movement. Contacts the tRNAs in the A and P-sites. In Parabacteroides distasonis (strain ATCC 8503 / DSM 20701 / CIP 104284 / JCM 5825 / NCTC 11152), this protein is Small ribosomal subunit protein uS13.